Reading from the N-terminus, the 293-residue chain is Indole-3-glycerol phosphate synthase (293 aa).

Belongs to the TrpC family.

The enzyme catalyses 1-(2-carboxyphenylamino)-1-deoxy-D-ribulose 5-phosphate + H(+) = (1S,2R)-1-C-(indol-3-yl)glycerol 3-phosphate + CO2 + H2O. It functions in the pathway amino-acid biosynthesis; L-tryptophan biosynthesis; L-tryptophan from chorismate: step 4/5. The chain is Indole-3-glycerol phosphate synthase from Prochlorococcus marinus (strain SARG / CCMP1375 / SS120).